Consider the following 338-residue polypeptide: Glycerol-3-phosphate dehydrogenase [NAD(P)+] (338 aa).

NADPH-binding residues include Ser-12, Trp-13, Arg-33, and Lys-110. Positions 110, 141, and 143 each coordinate sn-glycerol 3-phosphate. Ala-145 is a binding site for NADPH. Lys-196, Asp-249, Ser-259, Arg-260, and Asn-261 together coordinate sn-glycerol 3-phosphate. The Proton acceptor role is filled by Lys-196. Arg-260 is a binding site for NADPH. NADPH is bound by residues Val-284 and Glu-286.

Belongs to the NAD-dependent glycerol-3-phosphate dehydrogenase family.

It localises to the cytoplasm. It carries out the reaction sn-glycerol 3-phosphate + NAD(+) = dihydroxyacetone phosphate + NADH + H(+). It catalyses the reaction sn-glycerol 3-phosphate + NADP(+) = dihydroxyacetone phosphate + NADPH + H(+). It functions in the pathway membrane lipid metabolism; glycerophospholipid metabolism. Its function is as follows. Catalyzes the reduction of the glycolytic intermediate dihydroxyacetone phosphate (DHAP) to sn-glycerol 3-phosphate (G3P), the key precursor for phospholipid synthesis. The protein is Glycerol-3-phosphate dehydrogenase [NAD(P)+] of Limosilactobacillus reuteri (strain DSM 20016) (Lactobacillus reuteri).